A 164-amino-acid chain; its full sequence is Coenzyme Q-binding protein coq10, mitochondrial (164 aa).

The protein belongs to the COQ10 family. Interacts with coenzyme Q.

The protein localises to the mitochondrion inner membrane. Functionally, required for the function of coenzyme Q in the respiratory chain. May serve as a chaperone or may be involved in the transport of Q6 from its site of synthesis to the catalytic sites of the respiratory complexes. The chain is Coenzyme Q-binding protein coq10, mitochondrial from Schizosaccharomyces pombe (strain 972 / ATCC 24843) (Fission yeast).